The primary structure comprises 504 residues: Lysine--tRNA ligase (504 aa).

2 residues coordinate Mg(2+): E411 and E418.

Belongs to the class-II aminoacyl-tRNA synthetase family. Homodimer. It depends on Mg(2+) as a cofactor.

The protein resides in the cytoplasm. The enzyme catalyses tRNA(Lys) + L-lysine + ATP = L-lysyl-tRNA(Lys) + AMP + diphosphate. The polypeptide is Lysine--tRNA ligase (Clostridium botulinum (strain Loch Maree / Type A3)).